A 65-amino-acid chain; its full sequence is Beta-defensin 41 (65 aa).

A signal peptide spans 1–19 (MKFHLFFFILLFGATILTA). 3 cysteine pairs are disulfide-bonded: Cys35–Cys63, Cys42–Cys56, and Cys46–Cys64.

Belongs to the beta-defensin family. In terms of tissue distribution, isoform 2 is epididymis-specific and expressed mainly in the proximal caput.

The protein resides in the secreted. Its function is as follows. Has bactericidal activity. Functionally, isoform 2 may play a role in the antimicrobial protection of sperm and urogenital tract epithelia. The chain is Beta-defensin 41 from Mus musculus (Mouse).